The following is a 334-amino-acid chain: Phosphate acyltransferase (334 aa).

The protein belongs to the PlsX family. Homodimer. Probably interacts with PlsY.

It localises to the cytoplasm. It carries out the reaction a fatty acyl-[ACP] + phosphate = an acyl phosphate + holo-[ACP]. The protein operates within lipid metabolism; phospholipid metabolism. Functionally, catalyzes the reversible formation of acyl-phosphate (acyl-PO(4)) from acyl-[acyl-carrier-protein] (acyl-ACP). This enzyme utilizes acyl-ACP as fatty acyl donor, but not acyl-CoA. The polypeptide is Phosphate acyltransferase (Thermotoga petrophila (strain ATCC BAA-488 / DSM 13995 / JCM 10881 / RKU-1)).